An 89-amino-acid polypeptide reads, in one-letter code: UPF0297 protein MGAS9429_Spy1808 (89 aa).

The protein belongs to the UPF0297 family.

The polypeptide is UPF0297 protein MGAS9429_Spy1808 (Streptococcus pyogenes serotype M12 (strain MGAS9429)).